Consider the following 456-residue polypeptide: Arginine biosynthesis bifunctional protein ArgJ, mitochondrial (456 aa).

The substrate site is built by T184, K213, T224, E311, N451, and T456. T224 functions as the Nucleophile in the catalytic mechanism.

It belongs to the ArgJ family. Heterodimer of an alpha and a beta chain. In terms of processing, the alpha and beta chains are autoproteolytically processed from a single precursor protein within the mitochondrion.

The protein resides in the mitochondrion matrix. It carries out the reaction N(2)-acetyl-L-ornithine + L-glutamate = N-acetyl-L-glutamate + L-ornithine. The enzyme catalyses L-glutamate + acetyl-CoA = N-acetyl-L-glutamate + CoA + H(+). It participates in amino-acid biosynthesis; L-arginine biosynthesis; L-ornithine and N-acetyl-L-glutamate from L-glutamate and N(2)-acetyl-L-ornithine (cyclic): step 1/1. The protein operates within amino-acid biosynthesis; L-arginine biosynthesis; N(2)-acetyl-L-ornithine from L-glutamate: step 1/4. Functionally, catalyzes two activities which are involved in the cyclic version of arginine biosynthesis: the synthesis of acetylglutamate from glutamate and acetyl-CoA, and of ornithine by transacetylation between acetylornithine and glutamate. The polypeptide is Arginine biosynthesis bifunctional protein ArgJ, mitochondrial (Aspergillus niger (strain ATCC MYA-4892 / CBS 513.88 / FGSC A1513)).